A 314-amino-acid chain; its full sequence is Porphobilinogen deaminase (314 aa).

C242 carries the post-translational modification S-(dipyrrolylmethanemethyl)cysteine.

The protein belongs to the HMBS family. In terms of assembly, monomer. It depends on dipyrromethane as a cofactor.

It catalyses the reaction 4 porphobilinogen + H2O = hydroxymethylbilane + 4 NH4(+). It participates in porphyrin-containing compound metabolism; protoporphyrin-IX biosynthesis; coproporphyrinogen-III from 5-aminolevulinate: step 2/4. Its function is as follows. Tetrapolymerization of the monopyrrole PBG into the hydroxymethylbilane pre-uroporphyrinogen in several discrete steps. This chain is Porphobilinogen deaminase (hemC), found in Bacillus subtilis (strain 168).